Reading from the N-terminus, the 24-residue chain is FLPILAGLAAKIVPKLFCLATKKC.

Cys-18 and Cys-24 are joined by a disulfide.

As to expression, expressed by the skin glands.

It localises to the secreted. The protein localises to the target cell membrane. Antibacterial peptide. Has activity against the Gram-positive bacterium S.aureus (MIC=2 uM) and the Gram-negative bacterium E.coli (MIC=32 uM). Has a strong hemolytic activity (LC(50)=5 uM). The protein is Brevinin-1CSa of Rana cascadae (Cascades frog).